Here is an 808-residue protein sequence, read N- to C-terminus: MAAPEAWRARSCWFCEVAAATTMEATSREAAPAKSSASGPSAPPALFELCGRAVSAHMGVLESGVWALPGPILQSILPLLNIYYLERIEETALKKGLSTQAIWRRLWDELMKTRPSSLESVTCWRAKFMEAFFSHVLRGTIDVSSDKRLCDQRFSPLLHSSRHVRQLTICNMLQGATELVAEPNRRVLETLASSLHTLKFRHLLFSDVAAQQSLRQLLHQLIHHGAVSQVSLYSWPVPESALFILILTMSAGFWQPGPGSLPCRLCGEASRGRAPSRDEGSLLLGSRRPRRDAAERCAAALMATRRKSEVKQVPRALPTSRVTRRSTQESLTIGGTDSKRELYPPATSYEASGTKQPSSAPTAASSSTSSKRAPASSVSQPKPLKRFKRATGKKGPRTRQGSGAESEDLYDFVFIVAGEKEDGEEMEIGEVACGALDGSDPSCLGLPALEASQRFRSISTLELFTVPLSTEAALTLCHLLSSWVSLESLTLSYNGLGSNIFRLLDSLRVLSGQAGCRLRALHLSDLFSPLPILELTRAIVRALPLLRVLSIRVDHPSQRDNPAVPENAGPPGHIIGDEEIPENCLEQLEMGFPRGAQPAPLLCSVLKASGSLQQLSLDSATFASPQDFGLVLQTLKEYNLSLKRLSFHDMNLADCQSEVLFLLKNLTLQEITFSFCRLFEKRPAQFLPEMVAAMKGNSTLKGLRLPGNRLGNAGLLALADVFSEDSSSSLCQLDISSNCIKPDGLLEFAKRLERWGRGAFGHLRLFQNWLDQDAVTAREAIRRLRATCHVVSDSWDSTQAFADYVSTM.

Residues 45–54 (ALFELCGRAV) form an interaction with Elongin BC complex region. Phosphoserine is present on residues Ser-155, Ser-276, and Ser-326. 2 disordered regions span residues 269 to 289 (ASRGRAPSRDEGSLLLGSRRP) and 304 to 404 (TRRK…GSGA). Phosphothreonine is present on Thr-327. Low complexity predominate over residues 357–379 (PSSAPTAASSSTSSKRAPASSVS). Phosphoserine is present on Ser-369. Positions 383–397 (PLKRFKRATGKKGPR) are enriched in basic residues. LRR repeat units follow at residues 483 to 503 (WVSLESLTLSYNGLGSNIFRL), 514 to 526 (AGCRLRALHLSDL), 527 to 551 (FSPLPILELTRAIVRALPLLRVLSI), 609 to 631 (SGSLQQLSLDSATFASPQDFGLV), 632 to 655 (LQTLKEYNLSLKRLSFHDMNLADC), 697 to 724 (NSTLKGLRLPGNRLGNAGLLALADVFSE), and 727 to 748 (SSSLCQLDISSNCIKPDGLLEF).

In terms of assembly, part of an E3 ubiquitin-protein ligase complex with Elongin BC (ELOB and ELOC), RBX1 and CUL5. Component of a probable ECS(LRRC41) complex which contains CUL5, RNF7/RBX2, Elongin BC and LRRC41. Interacts with CUL5, RNF7, ELOB and ELOC.

Its pathway is protein modification; protein ubiquitination. Functionally, probable substrate recognition component of an ECS (Elongin BC-CUL2/5-SOCS-box protein) E3 ubiquitin ligase complex which mediates the ubiquitination and subsequent proteasomal degradation of target proteins. This Rattus norvegicus (Rat) protein is Leucine-rich repeat-containing protein 41 (Lrrc41).